A 358-amino-acid polypeptide reads, in one-letter code: 4-hydroxy-3-methylbut-2-en-1-yl diphosphate synthase (flavodoxin) (358 aa).

Positions 270, 273, 305, and 312 each coordinate [4Fe-4S] cluster.

The protein belongs to the IspG family. [4Fe-4S] cluster serves as cofactor.

The enzyme catalyses (2E)-4-hydroxy-3-methylbut-2-enyl diphosphate + oxidized [flavodoxin] + H2O + 2 H(+) = 2-C-methyl-D-erythritol 2,4-cyclic diphosphate + reduced [flavodoxin]. It functions in the pathway isoprenoid biosynthesis; isopentenyl diphosphate biosynthesis via DXP pathway; isopentenyl diphosphate from 1-deoxy-D-xylulose 5-phosphate: step 5/6. In terms of biological role, converts 2C-methyl-D-erythritol 2,4-cyclodiphosphate (ME-2,4cPP) into 1-hydroxy-2-methyl-2-(E)-butenyl 4-diphosphate. This chain is 4-hydroxy-3-methylbut-2-en-1-yl diphosphate synthase (flavodoxin), found in Ruthia magnifica subsp. Calyptogena magnifica.